Consider the following 264-residue polypeptide: MSKITSSTLLKFKQEGKKFTALTAYDASFAGAFDSEGIDVLLVGDSLGMVLQGHDDTLPVTVEDIVYHTRCVRRGIKRSLLIADMPFMSYATPEQAMTNATALMQAGANMVKLEGGHWLLETVTKLTERGIPVCAHLGLTPQSVHVFGGFKVQGRDADNAQRIIDEAKAIEAAGAQLLVLECIPAALAKSITEALTIPVIGIGAGADTDGQILVMHDVLGISSGYIPRFSKNYLAQTGEIRSAIRAYIEEVDTGVFPAAEHTFS.

The Mg(2+) site is built by aspartate 45 and aspartate 84. Residues aspartate 45 to serine 46, aspartate 84, and lysine 112 each bind 3-methyl-2-oxobutanoate. A Mg(2+)-binding site is contributed by glutamate 114. Glutamate 181 acts as the Proton acceptor in catalysis.

The protein belongs to the PanB family. As to quaternary structure, homodecamer; pentamer of dimers. It depends on Mg(2+) as a cofactor.

The protein localises to the cytoplasm. It carries out the reaction 3-methyl-2-oxobutanoate + (6R)-5,10-methylene-5,6,7,8-tetrahydrofolate + H2O = 2-dehydropantoate + (6S)-5,6,7,8-tetrahydrofolate. Its pathway is cofactor biosynthesis; (R)-pantothenate biosynthesis; (R)-pantoate from 3-methyl-2-oxobutanoate: step 1/2. Functionally, catalyzes the reversible reaction in which hydroxymethyl group from 5,10-methylenetetrahydrofolate is transferred onto alpha-ketoisovalerate to form ketopantoate. The chain is 3-methyl-2-oxobutanoate hydroxymethyltransferase from Shewanella loihica (strain ATCC BAA-1088 / PV-4).